The sequence spans 290 residues: Phosphoribosylaminoimidazole-succinocarboxamide synthase (290 aa).

Belongs to the SAICAR synthetase family.

It carries out the reaction 5-amino-1-(5-phospho-D-ribosyl)imidazole-4-carboxylate + L-aspartate + ATP = (2S)-2-[5-amino-1-(5-phospho-beta-D-ribosyl)imidazole-4-carboxamido]succinate + ADP + phosphate + 2 H(+). It functions in the pathway purine metabolism; IMP biosynthesis via de novo pathway; 5-amino-1-(5-phospho-D-ribosyl)imidazole-4-carboxamide from 5-amino-1-(5-phospho-D-ribosyl)imidazole-4-carboxylate: step 1/2. In Haemophilus influenzae (strain PittEE), this protein is Phosphoribosylaminoimidazole-succinocarboxamide synthase.